We begin with the raw amino-acid sequence, 369 residues long: Queuine tRNA-ribosyltransferase (369 aa).

The Proton acceptor role is filled by aspartate 89. Residues aspartate 89–phenylalanine 93, aspartate 142, glutamine 184, and glycine 211 contribute to the substrate site. Residues glycine 242 to leucine 248 are RNA binding. The Nucleophile role is filled by aspartate 261. The interval threonine 266–arginine 270 is RNA binding; important for wobble base 34 recognition. Zn(2+) is bound by residues cysteine 299, cysteine 301, cysteine 304, and histidine 330.

This sequence belongs to the queuine tRNA-ribosyltransferase family. As to quaternary structure, homodimer. Within each dimer, one monomer is responsible for RNA recognition and catalysis, while the other monomer binds to the replacement base PreQ1. Zn(2+) is required as a cofactor.

The enzyme catalyses 7-aminomethyl-7-carbaguanine + guanosine(34) in tRNA = 7-aminomethyl-7-carbaguanosine(34) in tRNA + guanine. The protein operates within tRNA modification; tRNA-queuosine biosynthesis. Its function is as follows. Catalyzes the base-exchange of a guanine (G) residue with the queuine precursor 7-aminomethyl-7-deazaguanine (PreQ1) at position 34 (anticodon wobble position) in tRNAs with GU(N) anticodons (tRNA-Asp, -Asn, -His and -Tyr). Catalysis occurs through a double-displacement mechanism. The nucleophile active site attacks the C1' of nucleotide 34 to detach the guanine base from the RNA, forming a covalent enzyme-RNA intermediate. The proton acceptor active site deprotonates the incoming PreQ1, allowing a nucleophilic attack on the C1' of the ribose to form the product. After dissociation, two additional enzymatic reactions on the tRNA convert PreQ1 to queuine (Q), resulting in the hypermodified nucleoside queuosine (7-(((4,5-cis-dihydroxy-2-cyclopenten-1-yl)amino)methyl)-7-deazaguanosine). The sequence is that of Queuine tRNA-ribosyltransferase from Thermotoga sp. (strain RQ2).